The sequence spans 128 residues: MLVKKSQISRKFIEKKSGIVHIQSTTNNTLITLTDLEGNTQFFVSAGTLGFKNSRKSTVYASGAAAEALASKAFNEGYRTIIVKIKGLGYGKKSAIRGLQKSNLVIKQIQEVTPIAHNGCRPPKKRRV.

Belongs to the universal ribosomal protein uS11 family.

It localises to the mitochondrion. The sequence is that of Small ribosomal subunit protein uS11m (RPS11) from Prototheca wickerhamii.